Consider the following 495-residue polypeptide: Type-1 histone deacetylase 1 (495 aa).

Residue aspartate 94 coordinates substrate. Histidine 136 functions as the Proton acceptor in the catalytic mechanism. Glycine 144 is a binding site for substrate. The a divalent metal cation site is built by aspartate 171, histidine 173, and aspartate 259. Tyrosine 298 provides a ligand contact to substrate. Positions 372–495 (PAAAHHDIPP…EDADVDMDSG (124 aa)) are disordered. Positions 396 to 413 (DVRISEADRDKKVHHQGE) are enriched in basic and acidic residues. Polar residues predominate over residues 425-443 (NYSNGLEATSTSRRNQVSI). The segment covering 454–480 (NSRNNNNNNNNNNNNNNNNNNNSNNNN) has biased composition (low complexity).

Belongs to the histone deacetylase family. HD type 1 subfamily.

It is found in the nucleus. The protein resides in the cytoplasm. It catalyses the reaction N(6)-acetyl-L-lysyl-[histone] + H2O = L-lysyl-[histone] + acetate. In terms of biological role, responsible for the deacetylation of lysine residues on the N-terminal part of the core histones (H2A, H2B, H3 and H4). Histone deacetylation plays an important role in transcriptional regulation, cell cycle progression and developmental events. Histone deacetylases act via the formation of large multiprotein complexes. This is Type-1 histone deacetylase 1 (hdaA) from Dictyostelium discoideum (Social amoeba).